Here is a 96-residue protein sequence, read N- to C-terminus: Small ribosomal subunit protein bS20 (96 aa).

Positions 1-27 (MAKQEVAAKKVKRPTALKRDLQNKKKR) are disordered.

It belongs to the bacterial ribosomal protein bS20 family.

Its function is as follows. Binds directly to 16S ribosomal RNA. This is Small ribosomal subunit protein bS20 from Protochlamydia amoebophila (strain UWE25).